The following is a 263-amino-acid chain: Probable methylthioribulose-1-phosphate dehydratase (263 aa).

Cys102 contributes to the substrate binding site. Residues His120 and His122 each contribute to the Zn(2+) site. Residue Glu144 is the Proton donor/acceptor of the active site. His200 lines the Zn(2+) pocket.

It belongs to the aldolase class II family. MtnB subfamily. Zn(2+) serves as cofactor.

The protein localises to the cytoplasm. It catalyses the reaction 5-(methylsulfanyl)-D-ribulose 1-phosphate = 5-methylsulfanyl-2,3-dioxopentyl phosphate + H2O. It participates in amino-acid biosynthesis; L-methionine biosynthesis via salvage pathway; L-methionine from S-methyl-5-thio-alpha-D-ribose 1-phosphate: step 2/6. Its function is as follows. Catalyzes the dehydration of methylthioribulose-1-phosphate (MTRu-1-P) into 2,3-diketo-5-methylthiopentyl-1-phosphate (DK-MTP-1-P). The chain is Probable methylthioribulose-1-phosphate dehydratase from Caenorhabditis elegans.